The following is a 92-amino-acid chain: PqqA binding protein (92 aa).

This sequence belongs to the PqqD family. Monomer. Interacts with PqqE.

It functions in the pathway cofactor biosynthesis; pyrroloquinoline quinone biosynthesis. Functions as a PqqA binding protein and presents PqqA to PqqE, in the pyrroloquinoline quinone (PQQ) biosynthetic pathway. The sequence is that of PqqA binding protein from Xanthomonas euvesicatoria pv. vesicatoria (strain 85-10) (Xanthomonas campestris pv. vesicatoria).